An 843-amino-acid chain; its full sequence is Protein PLASTID MOVEMENT IMPAIRED 1 (843 aa).

Positions 30-58 (PQVSVGNRRTNSLALPRSSVPSLVTSADE) are enriched in polar residues. 2 disordered regions span residues 30–65 (PQVSVGNRRTNSLALPRSSVPSLVTSADEVSTARAE) and 88–116 (LEVEEEENVTQSNRIVKKPEESSSGSGVK). The C2 NT-type domain maps to 131–284 (LVRIGMQKLS…ELALKLGFQI (154 aa)). Disordered stretches follow at residues 300–412 (FGMK…GTIG) and 450–472 (MMKDESDGGDGETESQRLDEEEQ). Residues 307–336 (KPKNFANSFGRKQSKTSFSVPSPKMTSRSE) show a composition bias toward polar residues. Phosphoserine is present on residues S314 and S328. Positions 365 to 381 (PEEKPVQKNDKPEQRAE) are enriched in basic and acidic residues. The residue at position 404 (T404) is a Phosphothreonine. S407 carries the phosphoserine modification. T410 is modified (phosphothreonine). A compositionally biased stretch (acidic residues) spans 456–472 (DGGDGETESQRLDEEEQ). At S507 the chain carries Phosphoserine.

As to expression, expressed in leaves, stems, cauline leaves, and flowers but not in roots. Present in leaves in both mesophyll and pavement cells.

The protein resides in the cytoplasm. Functionally, necessary for chloroplast and nuclear photorelocation movements via the regulation of chloroplast-actin (cp-actin) filaments in mesophyll cells, and together with PMIR1, in pavement cells. Required component for both the low- and high-light-dependent chloroplast movement responses via an abscisic acid (ABA) pathway. Involved in the ABA response pathway during seed germination. Modulates ABA accumulation during periods of water deficit at the seedling stage. The chain is Protein PLASTID MOVEMENT IMPAIRED 1 from Arabidopsis thaliana (Mouse-ear cress).